The chain runs to 839 residues: MAAEGEQRATSDVTKALARHLNCLNDENKMIRRRALAAIQKEAADEKLASAVLQHVFLELLKPLLRCLSDPMEKCRELSIQIIVYCVSHVPRPEEALPYLMPALTQRLGQQQLVELSEELRLAMVELLTLLVEVCGKKLAPYLDEMIQIFQRTMVDPFPDVKKESCKCASNYATCIPEHFHMQAESLIKPLMQTISHQHSKVRVAVIQTTGTVIQYSSGKSVDDVLSHLAQRLFDDSVQVRQAVTVVVGDWLLKLQDRYSFFHKLIPLLLSSTTDEIPEIRKLALDYWEKIGSQWEKENEEDLKDKLDFSAPCPSYYPAGVQRPGLGCRELIFRNLSKILPAISRDVTNWVAGTRIKSSQLLAVLLLHGEDHITQHMELLLSTLYHSCLDEENQVVINSVKSAELIGTFVNPEVFLKLILSALQKSPLASHLMTLAACIRGCSREMLKTHLTKITSVISQSDVCQGSERVLYQEQLLCCIQSLIDVCQQDCTEVSLQCMNVLITILASPASESLHKKVQDTLLSLSEVQGLNGPHDLYRQHMQQLLDWVSQSHNHWTSYSVEQRQFEVIATESGPVMGETLHLFVPILKMCLQPTREPQMRLKLFTMLSKLLLKASETVNSQGQLHRYSESFINDMIVPNLKWQAGRTAGAIRTVAVSCLWVLLQSETLSQQEILQVEDNLMPRVITTLEEDSKMCRLMSCCIITALLSTCERQLRPDKLNKIYPELLKRLDDASDEVRVAAAKTLYQWFKCITDEYERTTYKGHLEFLYRGLLVHLDDPDASLQLIVLDLLKEGSAVCPSLLVQEIEAVRHKHRSPAYCDQLLHYIQKYTSPTPTECT.

HEAT repeat units lie at residues 10–48, 54–92, 94–137, 140–178, 181–219, 221–257, 259–297, 578–617, 675–713, 717–755, and 723–761; these read TSDV…DEKL, QHVF…HVPR, EEAL…VCGK, APYL…CIPE, HMQA…YSSG, SVDD…KLQD, YSFF…QWEK, GETL…KASE, LQVE…TCER, PDKL…CITD, and IYPE…ERTT.

The protein belongs to the DNAAF5 family. As to quaternary structure, interacts with DNAI2; probably involved in outer arm dynein assembly.

The protein resides in the cytoplasm. The protein localises to the dynein axonemal particle. Functionally, cytoplasmic protein involved in the delivery of the dynein machinery to the motile cilium. It is required for the assembly of the axonemal dynein inner and outer arms, two structures attached to the peripheral outer doublet A microtubule of the axoneme, that play a crucial role in cilium motility. The chain is Dynein axonemal assembly factor 5 from Xenopus laevis (African clawed frog).